The sequence spans 228 residues: Ribulose-phosphate 3-epimerase-like protein 1 (228 aa).

Serine 10 contacts substrate. Residues histidine 35, aspartate 37, and histidine 70 each contribute to the a divalent metal cation site. The active-site Proton acceptor is aspartate 37. Residues histidine 70, 146–149 (GFGE), 175–177 (DGG), and 197–198 (GS) each bind substrate. Residue aspartate 175 participates in a divalent metal cation binding. Aspartate 175 acts as the Proton donor in catalysis.

This sequence belongs to the ribulose-phosphate 3-epimerase family. As to quaternary structure, homodimer. It depends on Fe(2+) as a cofactor. Mn(2+) is required as a cofactor. Zn(2+) serves as cofactor. Requires Co(2+) as cofactor.

The enzyme catalyses D-ribulose 5-phosphate = D-xylulose 5-phosphate. Its pathway is carbohydrate degradation. Functionally, catalyzes the reversible epimerization of D-ribulose 5-phosphate to D-xylulose 5-phosphate. This is Ribulose-phosphate 3-epimerase-like protein 1 (RPEL1) from Homo sapiens (Human).